The chain runs to 511 residues: Maturase K (511 aa).

This sequence belongs to the intron maturase 2 family. MatK subfamily.

It is found in the plastid. The protein localises to the chloroplast. Its function is as follows. Usually encoded in the trnK tRNA gene intron. Probably assists in splicing its own and other chloroplast group II introns. This chain is Maturase K, found in Hordeum vulgare subsp. spontaneum (Wild barley).